A 225-amino-acid chain; its full sequence is UPF0758 protein XC_3944 (225 aa).

The region spanning 102–224 is the MPN domain; sequence ALSDPSSVGR…PVSLAERGWV (123 aa). 3 residues coordinate Zn(2+): His-173, His-175, and Asp-186. The JAMM motif motif lies at 173-186; it reads HNHPSGNPEPSEAD.

It belongs to the UPF0758 family.

This Xanthomonas campestris pv. campestris (strain 8004) protein is UPF0758 protein XC_3944.